The sequence spans 125 residues: uncharacterized protein (125 aa).

The helical transmembrane segment at 100–120 (YFKVAFALAVLTPLAIWIFYI) threads the bilayer.

The protein resides in the membrane. This is an uncharacterized protein from Saccharomyces cerevisiae (strain ATCC 204508 / S288c) (Baker's yeast).